The primary structure comprises 755 residues: ABC transporter G family member 2 (755 aa).

In terms of domain architecture, ABC transporter spans 98–358 (LSFTDLTYSV…FSEFKHPIPE (261 aa)). 151 to 158 (GASGSGKS) is a binding site for ATP. The region spanning 449–659 (IEMIVIGKRA…PYEGVLQNEF (211 aa)) is the ABC transmembrane type-2 domain. Helical transmembrane passes span 468–488 (LLGMRLGAVMVTGIILATMFT), 503–523 (FFAFAMSTTFYTCAEAIPVFL), 552–572 (IPALIVLSASFAATTFWAVGL), 579–599 (FFFFYFTILASFWAGSSFVTF), 609–629 (LGFTVVVAILAYFLLFSGFFI), and 728–748 (LWITVAWGFFFRVLFYFTLLI).

The protein belongs to the ABC transporter superfamily. ABCG family. Eye pigment precursor importer (TC 3.A.1.204) subfamily.

It localises to the membrane. The protein is ABC transporter G family member 2 (ABCG2) of Arabidopsis thaliana (Mouse-ear cress).